Consider the following 1221-residue polypeptide: DNA-directed RNA polymerase subunit beta' (1221 aa).

Residues C60, C62, C75, and C78 each contribute to the Zn(2+) site. Mg(2+) is bound by residues D449, D451, and D453. Residues C820, C894, C901, and C904 each coordinate Zn(2+).

Belongs to the RNA polymerase beta' chain family. As to quaternary structure, the RNAP catalytic core consists of 2 alpha, 1 beta, 1 beta' and 1 omega subunit. When a sigma factor is associated with the core the holoenzyme is formed, which can initiate transcription. The cofactor is Mg(2+). Requires Zn(2+) as cofactor.

The catalysed reaction is RNA(n) + a ribonucleoside 5'-triphosphate = RNA(n+1) + diphosphate. Its function is as follows. DNA-dependent RNA polymerase catalyzes the transcription of DNA into RNA using the four ribonucleoside triphosphates as substrates. The sequence is that of DNA-directed RNA polymerase subunit beta' from Ligilactobacillus salivarius (strain UCC118) (Lactobacillus salivarius).